Reading from the N-terminus, the 301-residue chain is GTPase Era (301 aa).

Residues 7-175 enclose the Era-type G domain; the sequence is YCGFIAIVGR…AAIVRKHLPE (169 aa). The tract at residues 15 to 22 is G1; sequence GRPNVGKS. GTP is bound at residue 15 to 22; it reads GRPNVGKS. Residues 41–45 form a G2 region; the sequence is QTTRH. The segment at 62–65 is G3; it reads DTPG. Residues 62-66 and 124-127 contribute to the GTP site; these read DTPGL and NKVD. The tract at residues 124–127 is G4; it reads NKVD. The interval 154 to 156 is G5; it reads ISA. One can recognise a KH type-2 domain in the interval 206–283; the sequence is LGAELPYSVT…HLELWVKVKS (78 aa).

Belongs to the TRAFAC class TrmE-Era-EngA-EngB-Septin-like GTPase superfamily. Era GTPase family. As to quaternary structure, monomer.

It is found in the cytoplasm. Its subcellular location is the cell inner membrane. In terms of biological role, an essential GTPase that binds both GDP and GTP, with rapid nucleotide exchange. Plays a role in 16S rRNA processing and 30S ribosomal subunit biogenesis and possibly also in cell cycle regulation and energy metabolism. The protein is GTPase Era of Escherichia coli O157:H7.